Here is a 61-residue protein sequence, read N- to C-terminus: Small ribosomal subunit protein uS14 (61 aa).

4 residues coordinate Zn(2+): Cys24, Cys27, Cys40, and Cys43.

This sequence belongs to the universal ribosomal protein uS14 family. Zinc-binding uS14 subfamily. Part of the 30S ribosomal subunit. Contacts proteins S3 and S10. The cofactor is Zn(2+).

Functionally, binds 16S rRNA, required for the assembly of 30S particles and may also be responsible for determining the conformation of the 16S rRNA at the A site. The polypeptide is Small ribosomal subunit protein uS14 (Deinococcus geothermalis (strain DSM 11300 / CIP 105573 / AG-3a)).